Consider the following 491-residue polypeptide: Galactose-1-phosphate uridylyltransferase (491 aa).

This sequence belongs to the galactose-1-phosphate uridylyltransferase type 2 family.

The protein localises to the cytoplasm. It catalyses the reaction alpha-D-galactose 1-phosphate + UDP-alpha-D-glucose = alpha-D-glucose 1-phosphate + UDP-alpha-D-galactose. It participates in carbohydrate metabolism; galactose metabolism. This chain is Galactose-1-phosphate uridylyltransferase (galT), found in Streptococcus mutans serotype c (strain ATCC 700610 / UA159).